Here is a 457-residue protein sequence, read N- to C-terminus: MQKYTSEARQLLALAIPVILAQVAQTAMGFVDTVMAGGYSATDMAAVAIGTSIWLPAILFGHGLLLALTPVIAQLNGSGRRERIAHQVRQGFWLAGFVSVLVMIVLWNAGYIIRSMHNIDPALADKAVGYLRALLWGAPGYLFFQVARNQCEGLAKTKPGMVMGFLGLLVNIPVNYIFIYGHFGMPELGGIGCGVATAAVYWVMFIAMLSYIKHARSMRDIRNEKGFGKPDSVVMKRLIQLGLPIALALFFEVTLFAVVALLVSPLGIVDVAGHQIALNFSSLMFVLPMSLAAAVTIRVGYRLGQGSTLDAQTAARTGLGVGICMAVVTAIFTVTLRKHIALLYNDNPEVVALAAQLMLLAAVYQISDSIQIIGSGILRGYKDTRSIFFITFTAYWVLGLPSGYILALTDLVVDRMGPAGFWMGFIIGLTSAAVLMMLRMRYLQRQPSAIILQRAAR.

Topologically, residues 1 to 10 are cytoplasmic; it reads MQKYTSEARQ. The helical transmembrane segment at 11–31 threads the bilayer; that stretch reads LLALAIPVILAQVAQTAMGFV. Residues 32–52 lie on the Extracellular side of the membrane; the sequence is DTVMAGGYSATDMAAVAIGTS. The chain crosses the membrane as a helical span at residues 53 to 73; sequence IWLPAILFGHGLLLALTPVIA. The Cytoplasmic portion of the chain corresponds to 74–92; that stretch reads QLNGSGRRERIAHQVRQGF. The chain crosses the membrane as a helical span at residues 93–113; that stretch reads WLAGFVSVLVMIVLWNAGYII. Residues 114–126 lie on the Extracellular side of the membrane; the sequence is RSMHNIDPALADK. The chain crosses the membrane as a helical span at residues 127–147; that stretch reads AVGYLRALLWGAPGYLFFQVA. Topologically, residues 148 to 159 are cytoplasmic; that stretch reads RNQCEGLAKTKP. Residues 160 to 180 form a helical membrane-spanning segment; sequence GMVMGFLGLLVNIPVNYIFIY. The Extracellular portion of the chain corresponds to 181–187; sequence GHFGMPE. The chain crosses the membrane as a helical span at residues 188-208; sequence LGGIGCGVATAAVYWVMFIAM. Topologically, residues 209-242 are cytoplasmic; it reads LSYIKHARSMRDIRNEKGFGKPDSVVMKRLIQLG. Residues 243–263 traverse the membrane as a helical segment; the sequence is LPIALALFFEVTLFAVVALLV. Residues 264–275 are Extracellular-facing; sequence SPLGIVDVAGHQ. Residues 276–296 form a helical membrane-spanning segment; it reads IALNFSSLMFVLPMSLAAAVT. Residues 297 to 313 are Cytoplasmic-facing; the sequence is IRVGYRLGQGSTLDAQT. A helical membrane pass occupies residues 314–334; that stretch reads AARTGLGVGICMAVVTAIFTV. Residues 335-349 are Extracellular-facing; sequence TLRKHIALLYNDNPE. Residues 350-370 traverse the membrane as a helical segment; it reads VVALAAQLMLLAAVYQISDSI. The Cytoplasmic segment spans residues 371–386; that stretch reads QIIGSGILRGYKDTRS. The helical transmembrane segment at 387-407 threads the bilayer; it reads IFFITFTAYWVLGLPSGYILA. At 408-417 the chain is on the extracellular side; that stretch reads LTDLVVDRMG. A helical transmembrane segment spans residues 418–438; it reads PAGFWMGFIIGLTSAAVLMML. Topologically, residues 439 to 457 are cytoplasmic; sequence RMRYLQRQPSAIILQRAAR.

This sequence belongs to the multi antimicrobial extrusion (MATE) (TC 2.A.66.1) family. MdtK subfamily.

The protein localises to the cell inner membrane. Multidrug efflux pump that functions probably as a Na(+)/drug antiporter. This chain is Multidrug resistance protein MdtK (mdtK), found in Salmonella choleraesuis (strain SC-B67).